The following is a 311-amino-acid chain: Pyrimidine-specific ribonucleoside hydrolase RihA (311 aa).

His240 is an active-site residue.

Belongs to the IUNH family. RihA subfamily.

Functionally, hydrolyzes cytidine or uridine to ribose and cytosine or uracil, respectively. The chain is Pyrimidine-specific ribonucleoside hydrolase RihA from Klebsiella pneumoniae subsp. pneumoniae (strain ATCC 700721 / MGH 78578).